The following is a 102-amino-acid chain: Monothiol glutaredoxin-S4 (102 aa).

Residues 1–101 enclose the Glutaredoxin domain; sequence MDKLQKMISE…PMLKRVGALW (101 aa). Cys21 is a [2Fe-2S] cluster binding site. The short motif at 99 to 102 is the Responsive for interaction with TGA factors element; it reads ALWL.

This sequence belongs to the glutaredoxin family. CC-type subfamily.

It is found in the cytoplasm. It localises to the nucleus. Functionally, may only reduce GSH-thiol disulfides, but not protein disulfides. The protein is Monothiol glutaredoxin-S4 (GRXS4) of Arabidopsis thaliana (Mouse-ear cress).